A 243-amino-acid polypeptide reads, in one-letter code: UDP-2,3-diacylglucosamine hydrolase (243 aa).

Residues Asp9, His11, Asp42, Asn79, and His114 each contribute to the Mn(2+) site. Substrate is bound at residue 79–80 (NR). Substrate is bound by residues Asp122, Ser160, Asn164, and His195. The Mn(2+) site is built by His195 and His197.

Belongs to the LpxH family. Mn(2+) is required as a cofactor.

It is found in the cell inner membrane. The enzyme catalyses UDP-2-N,3-O-bis[(3R)-3-hydroxytetradecanoyl]-alpha-D-glucosamine + H2O = 2-N,3-O-bis[(3R)-3-hydroxytetradecanoyl]-alpha-D-glucosaminyl 1-phosphate + UMP + 2 H(+). It functions in the pathway glycolipid biosynthesis; lipid IV(A) biosynthesis; lipid IV(A) from (3R)-3-hydroxytetradecanoyl-[acyl-carrier-protein] and UDP-N-acetyl-alpha-D-glucosamine: step 4/6. Hydrolyzes the pyrophosphate bond of UDP-2,3-diacylglucosamine to yield 2,3-diacylglucosamine 1-phosphate (lipid X) and UMP by catalyzing the attack of water at the alpha-P atom. Involved in the biosynthesis of lipid A, a phosphorylated glycolipid that anchors the lipopolysaccharide to the outer membrane of the cell. In Coxiella burnetii (strain RSA 331 / Henzerling II), this protein is UDP-2,3-diacylglucosamine hydrolase.